Reading from the N-terminus, the 797-residue chain is Plakophilin-3 (797 aa).

A disordered region spans residues 58 to 81 (GQQSRHNGSAELDGSAESARGMPR). Arginine 81 is subject to Omega-N-methylarginine. Residues serine 123, serine 180, and serine 183 each carry the phosphoserine modification. Residue tyrosine 195 is modified to Phosphotyrosine. Residues 219–228 (ASSGSSRAGG) show a composition bias toward low complexity. Positions 219 to 241 (ASSGSSRAGGLDWPEATEGPPSR) are disordered. Serine 240 is modified (phosphoserine). Threonine 250 is subject to Phosphothreonine. Residues 253-274 (RFQSSHRSRGGTGSVSGAGLEP) are disordered. Arginine 261 bears the Omega-N-methylarginine mark. Residues 283 to 288 (SLSLSL) form a required for interaction with SFN region. Phosphoserine is present on residues serine 285, serine 313, serine 314, and serine 331. Residues 294-724 (LPDVRGLDSY…AEVLVNIIAV (431 aa)) are required for interaction with GSK3B. 8 ARM repeats span residues 305–348 (GHRT…HRCY), 351–390 (AAAK…NLIY), 393–432 (VDNK…NLSS), 449–487 (TDLV…NLSS), 491–536 (ATRQ…NLSY), 596–637 (PKGL…NITA), 645–684 (VLSR…NLSR), and 689–730 (KDEM…NLVV). A required for binding to PKP2 mRNA region spans residues 516-797 (VGKCEDKSVE…GYRKEDFLGP (282 aa)).

This sequence belongs to the beta-catenin family. Found in a complex composed of CDH1, RAP1A and PKP3; PKP3 acts as a scaffold protein within the complex, the complex is required for CDH1 localization to mature desmosome cell junctions. Interacts with FXR1; the interaction facilitates the binding of PKP3 to PKP2 mRNA. Interacts (via ARM repeats) with GSK3B; the interaction may be involved in PKP3 protein degradation. Interacts with hyperphosphorylated and hypophosphorylated RB1; the interaction inhibits RB1 interaction with and repression of the transcription factor E2F1, potentially via sequestering RB1 to the cytoplasm. Interacts with CDKN1A; the interaction sequesters CDKN1A to the cytoplasm thereby repressing its role as an inhibitor of CDK4- and CDK6-driven RB1 phosphorylation. Interacts (via N-terminus) with SFN; the interaction maintains the cytoplasmic pool of PKP3, facilitates PKP3 exchange at desmosomes and restricts PKP3 localization to existing desmosome cell junctions. Interacts (via N-terminus) with JUP; the interaction is required for PKP3 localization to desmosome cell-cell junctions. Phosphorylated at Ser-285 when localized to the cytoplasm, PKP3 at desmosome cell junctions is not phosphorylated. Phosphorylation at Try-195 by SRC is induced by reactive oxygen species and potentially acts as a release mechanism from desmosome cell-cell junctions. Expressed in all layers of the epidermis, but is most abundant in the basal layer (at protein level). Expressed in keratinocytes of the epidermis at birth (at protein level). Expressed in the anagen non-keratinized inner root sheath cuticle and hair cuticle (at protein level). Also expressed in the matrix, precursors of the inner root sheath and hair shaft lineages (at protein level). Expressed at apical membranes in the outer hair root sheath and basal layer keratinocytes (at protein level). Expressed in intestinal epithelial cells and lamina propria of the ileum (at protein level). Expressed in keratinocytes (at protein level).

It localises to the nucleus. The protein resides in the cell junction. The protein localises to the desmosome. It is found in the cytoplasm. Its subcellular location is the cell membrane. It localises to the adherens junction. Functionally, a component of desmosome cell-cell junctions which are required for positive regulation of cellular adhesion. Required for the localization of DSG2, DSP and PKP2 to mature desmosome junctions. May also play a role in the maintenance of DSG3 protein abundance in keratinocytes. Required for the formation of DSP-containing desmosome precursors in the cytoplasm during desmosome assembly. Also regulates the accumulation of CDH1 to mature desmosome junctions, via cAMP-dependent signaling and its interaction with activated RAP1A. Positively regulates the stabilization of PKP2 mRNA and therefore protein abundance, via its interaction with FXR1, may also regulate the protein abundance of DSP via the same mechanism. May also regulate the protein abundance of the desmosome component PKP1. Required for the organization of desmosome junctions at intercellular borders between basal keratinocytes of the epidermis, as a result plays a role in maintenance of the dermal barrier and regulation of the dermal inflammatory response. Required during epidermal keratinocyte differentiation for cell adherence at tricellular cell-cell contacts, via regulation of the timely formation of adherens junctions and desmosomes in a calcium-dependent manner, and may also play a role in the organization of the intracellular actin fiber belt. Acts as a negative regulator of the inflammatory response in hematopoietic cells of the skin and intestine, via modulation of proinflammatory cytokine production. Important for epithelial barrier maintenance in the intestine to reduce intestinal permeability, thereby plays a role in protection from intestinal-derived endotoxemia. Required for the development of hair follicles, via a role in the regulation of inner root sheaf length, correct alignment and anterior-posterior polarity of hair follicles. Promotes proliferation and cell-cycle G1/S phase transition of keratinocytes. Promotes E2F1-driven transcription of G1/S phase promoting genes by acting to release E2F1 from its inhibitory interaction with RB1, via sequestering RB1 and CDKN1A to the cytoplasm and thereby increasing CDK4- and CDK6-driven phosphorylation of RB1. May act as a scaffold protein to facilitate MAPK phosphorylation of RPS6KA protein family members and subsequently promote downstream EGFR signaling. May play a role in the positive regulation of transcription of Wnt-mediated TCF-responsive target genes. This is Plakophilin-3 (Pkp3) from Mus musculus (Mouse).